Here is a 339-residue protein sequence, read N- to C-terminus: MQTIWPHKHIHTLANFSIQDYKSVFELAHRFDVLKNAGTKKIPALQGTLVTSLFFEASTRTKNSFELAAKRLSADVQTFAPSSSSLTKGETIIDTALTYSAMGADTLVIRHSSSYITFEIAKKLDAINAKTSVLNAGDGLHSHPSQGLLDIYTLIKFFSKKSLSPDVLNSKKILIIGDVNHSRVARSNLWALSAFGADIILCGPKTLIPDEFINFLKTPAPKQKEDPVKSRGSITISRSLEESIKIADAIIVLRLQKERMMENLLSSIDSYSLDYGLTPEKLSLNSKEIPILHPGPINRGIEITSKVVDEYPNCLINNQVANGIPIRMALLYLLQKYNK.

The carbamoyl phosphate site is built by Arg-60 and Thr-61. Lys-88 serves as a coordination point for L-aspartate. Residues Arg-110, His-143, and Gln-146 each coordinate carbamoyl phosphate. Residues Arg-183 and Arg-254 each coordinate L-aspartate. Positions 295 and 296 each coordinate carbamoyl phosphate.

Belongs to the aspartate/ornithine carbamoyltransferase superfamily. ATCase family. Heterododecamer (2C3:3R2) of six catalytic PyrB chains organized as two trimers (C3), and six regulatory PyrI chains organized as three dimers (R2).

It catalyses the reaction carbamoyl phosphate + L-aspartate = N-carbamoyl-L-aspartate + phosphate + H(+). It functions in the pathway pyrimidine metabolism; UMP biosynthesis via de novo pathway; (S)-dihydroorotate from bicarbonate: step 2/3. In terms of biological role, catalyzes the condensation of carbamoyl phosphate and aspartate to form carbamoyl aspartate and inorganic phosphate, the committed step in the de novo pyrimidine nucleotide biosynthesis pathway. This chain is Aspartate carbamoyltransferase catalytic subunit, found in Prochlorococcus marinus (strain MIT 9312).